Reading from the N-terminus, the 690-residue chain is DNA ligase (690 aa).

NAD(+)-binding positions include 36-40, 85-86, and Glu-124; these read DSVYD and SL. Lys-126 functions as the N6-AMP-lysine intermediate in the catalytic mechanism. Residues Arg-147, Glu-184, Lys-308, and Lys-332 each contribute to the NAD(+) site. Positions 426, 429, 444, and 449 each coordinate Zn(2+). The BRCT domain maps to 614-690; it reads NQSNVFDGKS…INENELKLLL (77 aa).

This sequence belongs to the NAD-dependent DNA ligase family. LigA subfamily. Mg(2+) is required as a cofactor. Requires Mn(2+) as cofactor.

The enzyme catalyses NAD(+) + (deoxyribonucleotide)n-3'-hydroxyl + 5'-phospho-(deoxyribonucleotide)m = (deoxyribonucleotide)n+m + AMP + beta-nicotinamide D-nucleotide.. Functionally, DNA ligase that catalyzes the formation of phosphodiester linkages between 5'-phosphoryl and 3'-hydroxyl groups in double-stranded DNA using NAD as a coenzyme and as the energy source for the reaction. It is essential for DNA replication and repair of damaged DNA. The protein is DNA ligase of Prochlorococcus marinus (strain NATL2A).